The primary structure comprises 162 residues: uncharacterized protein (162 aa).

Residues 6-78 (LDDLDRNILR…ALIVLEVGKP (73 aa)) form the HTH asnC-type domain. The segment at residues 25–44 (ISELSEQLKKPESTIHFRIK) is a DNA-binding region (H-T-H motif).

This is an uncharacterized protein from Pyrococcus furiosus (strain ATCC 43587 / DSM 3638 / JCM 8422 / Vc1).